Reading from the N-terminus, the 646-residue chain is Long-chain fatty acid transport protein 1 (646 aa).

The Extracellular segment spans residues 1–13; it reads MRAPGAGSASVAS. A helical membrane pass occupies residues 14–34; that stretch reads LVLLWLLGLPWTWSTAAALGV. The Cytoplasmic segment spans residues 35–646; sequence YVGGGGWRFL…TRICSGAFAL (612 aa). Residues 191–475 form a sufficient for oligomerization region; sequence EMSGELGKSL…YISESATSKK (285 aa). AMP is bound at residue 246-257; sequence YIYTSGTTGLPK.

It belongs to the ATP-dependent AMP-binding enzyme family. In terms of assembly, self-associates. May function as a homodimer. Interacts with EPRS1; mediates the translocation of SLC27A1 from the cytoplasm to the plasma membrane thereby increasing the uptake of long-chain fatty acids. Interacts with DGAT2 and this interaction is enhanced in the presence of ZFYVE1.

It is found in the cell membrane. The protein localises to the endomembrane system. It localises to the cytoplasm. It catalyses the reaction a fatty acid(in) = a fatty acid(out). It carries out the reaction (9Z)-octadecenoate(out) = (9Z)-octadecenoate(in). The enzyme catalyses hexadecanoate(out) = hexadecanoate(in). The catalysed reaction is (5Z,8Z,11Z,14Z)-eicosatetraenoate(out) = (5Z,8Z,11Z,14Z)-eicosatetraenoate(in). It catalyses the reaction (9Z,12Z)-octadecadienoate(out) = (9Z,12Z)-octadecadienoate(in). It carries out the reaction a long-chain fatty acid + ATP + CoA = a long-chain fatty acyl-CoA + AMP + diphosphate. The enzyme catalyses (5Z,8Z,11Z,14Z)-eicosatetraenoate + ATP + CoA = (5Z,8Z,11Z,14Z)-eicosatetraenoyl-CoA + AMP + diphosphate. The catalysed reaction is a very long-chain fatty acid + ATP + CoA = a very long-chain fatty acyl-CoA + AMP + diphosphate. It catalyses the reaction tetracosanoate + ATP + CoA = tetracosanoyl-CoA + AMP + diphosphate. Its activity is regulated as follows. Inhibited by Triacsin C. Mediates the import of long-chain fatty acids (LCFA) into the cell by facilitating their transport at the plasma membrane. Also functions as an acyl-CoA ligase catalyzing the ATP-dependent formation of fatty acyl-CoA using LCFA and very-long-chain fatty acids (VLCFA) as substrates, which prevents fatty acid efflux from cells and might drive more fatty acid uptake. May act directly as a bona fide transporter, or alternatively, in a cytoplasmic or membrane-associated multimeric protein complex to trap and draw fatty acids towards accumulation. Plays a pivotal role in regulating available LCFA substrates from exogenous sources in tissues undergoing high levels of beta-oxidation or triglyceride synthesis. May be involved in regulation of cholesterol metabolism. Probably involved in fatty acid transport across the blood barrier. The protein is Long-chain fatty acid transport protein 1 of Bos taurus (Bovine).